The primary structure comprises 633 residues: Proline-rich protein LAS17 (633 aa).

Positions Leu-16–Ala-127 constitute a WH1 domain. 2 disordered regions span residues Arg-145–Asp-545 and Ala-563–Leu-606. The span at Ala-192–Thr-215 shows a compositional bias: low complexity. 2 stretches are compositionally biased toward pro residues: residues Thr-216 to Ser-225 and Ser-238 to Asn-256. 2 stretches are compositionally biased toward low complexity: residues Ser-257–Ser-269 and Pro-307–Arg-322. Thr-334 is modified (phosphothreonine). The residue at position 337 (Ser-337) is a Phosphoserine. A compositionally biased stretch (pro residues) spans Pro-342–Pro-357. Composition is skewed to polar residues over residues Thr-363–Leu-376, Asn-399–Arg-414, and Pro-454–Asn-465. Residues Gln-479–Ser-488 show a composition bias toward low complexity. The WH2 domain maps to Gly-547–Val-567. Phosphoserine is present on Ser-588.

As to quaternary structure, interacts with KRE6, LSB3, LSB5 and YSC84.

In Saccharomyces cerevisiae (strain ATCC 204508 / S288c) (Baker's yeast), this protein is Proline-rich protein LAS17 (LAS17).